The sequence spans 200 residues: Insulin, isoform 2 (200 aa).

The disordered stretch occupies residues glutamate 148–asparagine 200. Pro residues predominate over residues alanine 163–glutamate 174. Positions proline 175–glutamate 184 are enriched in low complexity.

Expressed in pancreas, eye and, to a lower extent, in limb.

In Homo sapiens (Human), this protein is Insulin, isoform 2 (INS-IGF2).